Consider the following 248-residue polypeptide: Probable transcriptional regulatory protein Rsph17025_0577 (248 aa).

Residues 1-21 are disordered; sequence MAGHSKWANIQHRKGKQDKLR.

Belongs to the TACO1 family.

Its subcellular location is the cytoplasm. In Cereibacter sphaeroides (strain ATCC 17025 / ATH 2.4.3) (Rhodobacter sphaeroides), this protein is Probable transcriptional regulatory protein Rsph17025_0577.